A 200-amino-acid polypeptide reads, in one-letter code: Ribonuclease HII (200 aa).

An RNase H type-2 domain is found at 10–200 (LIEAGCDEAG…LGDGQLNLNF (191 aa)). Residues Asp16, Glu17, and Asp108 each contribute to the a divalent metal cation site.

It belongs to the RNase HII family. Requires Mn(2+) as cofactor. Mg(2+) serves as cofactor.

Its subcellular location is the cytoplasm. It catalyses the reaction Endonucleolytic cleavage to 5'-phosphomonoester.. In terms of biological role, endonuclease that specifically degrades the RNA of RNA-DNA hybrids. The polypeptide is Ribonuclease HII (Bacteroides thetaiotaomicron (strain ATCC 29148 / DSM 2079 / JCM 5827 / CCUG 10774 / NCTC 10582 / VPI-5482 / E50)).